Here is a 28-residue protein sequence, read N- to C-terminus: Cruzioseptin-10 (28 aa).

Expressed by the skin glands.

The protein localises to the secreted. Its function is as follows. Has antimicrobial activity. The sequence is that of Cruzioseptin-10 from Cruziohyla calcarifer (Splendid leaf frog).